Here is a 122-residue protein sequence, read N- to C-terminus: MDITAISLVLFGSTFGLIFRMFIQNNLKINIGFNIQNTSIVNFIASFFLGILLALNLTNNNLLLLFYIGFLGCFSTFSSFIYQLFVLLQKRKFMHLFFHYFEVIIISFICFYLGYYLMQIIK.

The next 4 membrane-spanning stretches (helical) occupy residues 3-23 (ITAI…RMFI), 38-58 (TSIV…LNLT), 62-82 (LLLL…SFIY), and 93-113 (FMHL…CFYL). Positions 72 and 75 each coordinate Na(+).

It belongs to the fluoride channel Fluc/FEX (TC 1.A.43) family.

It localises to the cell inner membrane. It carries out the reaction fluoride(in) = fluoride(out). Its activity is regulated as follows. Na(+) is not transported, but it plays an essential structural role and its presence is essential for fluoride channel function. In terms of biological role, fluoride-specific ion channel. Important for reducing fluoride concentration in the cell, thus reducing its toxicity. This is Fluoride-specific ion channel FluC 2 from Prochlorococcus marinus (strain MIT 9312).